A 153-amino-acid chain; its full sequence is Endoribonuclease YbeY (153 aa).

The Zn(2+) site is built by H118, H122, and H128.

Belongs to the endoribonuclease YbeY family. Zn(2+) serves as cofactor.

It localises to the cytoplasm. In terms of biological role, single strand-specific metallo-endoribonuclease involved in late-stage 70S ribosome quality control and in maturation of the 3' terminus of the 16S rRNA. This Chloroflexus aggregans (strain MD-66 / DSM 9485) protein is Endoribonuclease YbeY.